A 732-amino-acid polypeptide reads, in one-letter code: Prolyl tripeptidyl peptidase (732 aa).

An N-terminal signal peptide occupies residues 1 to 24 (MKKTIFQQLFLSVCALTVALPCSA). Active-site charge relay system residues include serine 603, aspartate 678, and histidine 710.

This sequence belongs to the peptidase S9B family.

It carries out the reaction Hydrolysis of Xaa-Xaa-Pro-|-Yaa- releasing the N-terminal tripeptide of a peptide with Pro as the third residue (position P1) and where Yaa is not proline.. Serine proteinase. Releases tripeptides from the free amino terminus of proteins. Has a requirement for Pro in the P1 position, but is inactivated by Pro in the P1' position. This Porphyromonas gingivalis (strain ATCC 33277 / DSM 20709 / CIP 103683 / JCM 12257 / NCTC 11834 / 2561) protein is Prolyl tripeptidyl peptidase.